A 471-amino-acid chain; its full sequence is Serine hydroxymethyltransferase, cytosolic (471 aa).

Lys249 is modified (N6-(pyridoxal phosphate)lysine).

It belongs to the SHMT family. Requires pyridoxal 5'-phosphate as cofactor.

It is found in the cytoplasm. The protein resides in the cytosol. The enzyme catalyses (6R)-5,10-methylene-5,6,7,8-tetrahydrofolate + glycine + H2O = (6S)-5,6,7,8-tetrahydrofolate + L-serine. It functions in the pathway one-carbon metabolism; tetrahydrofolate interconversion. Functionally, catalyzes the interconversion of serine and glycine. Essential for viability and required for virulence in a murine model of established pulmonary infection. This is Serine hydroxymethyltransferase, cytosolic from Aspergillus fumigatus (strain ATCC MYA-4609 / CBS 101355 / FGSC A1100 / Af293) (Neosartorya fumigata).